Consider the following 103-residue polypeptide: Small ribosomal subunit protein uS17 (103 aa).

The interval 78-103 (SHSPKADKSAGSTAPAPEAAAKEVSE) is disordered.

The protein belongs to the universal ribosomal protein uS17 family. In terms of assembly, part of the 30S ribosomal subunit.

Functionally, one of the primary rRNA binding proteins, it binds specifically to the 5'-end of 16S ribosomal RNA. In Parasynechococcus marenigrum (strain WH8102), this protein is Small ribosomal subunit protein uS17.